Here is a 98-residue protein sequence, read N- to C-terminus: uncharacterized protein (98 aa).

The protein belongs to the CFAP97 family. As to expression, expressed in a number of tissues including brain, thymus, lung, heart, liver, spleen, kidney and testis.

This is an uncharacterized protein from Mus musculus (Mouse).